A 401-amino-acid polypeptide reads, in one-letter code: Tyrosine--tRNA ligase (401 aa).

Positions 43-52 (PTAPDLHLGH) match the 'HIGH' region motif. Residues 227 to 231 (KMSKS) carry the 'KMSKS' region motif. K230 serves as a coordination point for ATP. An S4 RNA-binding domain is found at 338–399 (MAIGNVLKEA…GKRRFAKINL (62 aa)).

It belongs to the class-I aminoacyl-tRNA synthetase family. TyrS type 2 subfamily. In terms of assembly, homodimer.

Its subcellular location is the cytoplasm. The enzyme catalyses tRNA(Tyr) + L-tyrosine + ATP = L-tyrosyl-tRNA(Tyr) + AMP + diphosphate + H(+). In terms of biological role, catalyzes the attachment of tyrosine to tRNA(Tyr) in a two-step reaction: tyrosine is first activated by ATP to form Tyr-AMP and then transferred to the acceptor end of tRNA(Tyr). The polypeptide is Tyrosine--tRNA ligase (Idiomarina loihiensis (strain ATCC BAA-735 / DSM 15497 / L2-TR)).